A 133-amino-acid chain; its full sequence is uncharacterized protein (133 aa).

Residues 36–56 traverse the membrane as a helical segment; the sequence is LPMLIALACIFLLLATCLLFM. Residues 105–133 are disordered; sequence HGRPTVPRQPLPGPEDNRSHCDYMESTKM. Basic and acidic residues predominate over residues 119 to 133; sequence EDNRSHCDYMESTKM.

It localises to the membrane. This is an uncharacterized protein from Homo sapiens (Human).